We begin with the raw amino-acid sequence, 118 residues long: V-type proton ATPase subunit G 1 (118 aa).

At Ala-2 the chain carries N-acetylalanine. Residues 55–90 are disordered; sequence FQSKQQAAMGSQGNLSAEVEQATRRQVQGMQSSQQR. 2 stretches are compositionally biased toward polar residues: residues 56–69 and 78–89; these read QSKQ…QGNL and RRQVQGMQSSQQ.

This sequence belongs to the V-ATPase G subunit family. V-ATPase is a heteromultimeric enzyme made up of two complexes: the ATP-hydrolytic V1 complex and the proton translocation V0 complex. The V1 complex consists of three catalytic AB heterodimers that form a heterohexamer, three peripheral stalks each consisting of EG heterodimers, one central rotor including subunits D and F, and the regulatory subunits C and H. The proton translocation complex V0 consists of the proton transport subunit a, a ring of proteolipid subunits c9c'', rotary subunit d, subunits e and f, and the accessory subunits ATP6AP1/Ac45 and ATP6AP2/PRR.

It is found in the apical cell membrane. Functionally, subunit of the V1 complex of vacuolar(H+)-ATPase (V-ATPase), a multisubunit enzyme composed of a peripheral complex (V1) that hydrolyzes ATP and a membrane integral complex (V0) that translocates protons. V-ATPase is responsible for acidifying and maintaining the pH of intracellular compartments and in some cell types, is targeted to the plasma membrane, where it is responsible for acidifying the extracellular environment. In aerobic conditions, involved in intracellular iron homeostasis, thus triggering the activity of Fe(2+) prolyl hydroxylase (PHD) enzymes, and leading to HIF1A hydroxylation and subsequent proteasomal degradation. This Canis lupus familiaris (Dog) protein is V-type proton ATPase subunit G 1 (ATP6V1G1).